Here is a 92-residue protein sequence, read N- to C-terminus: RIIa domain-containing protein 1 (92 aa).

Residues 43 to 77 form the RIIa domain; it reads KEVEWLISGFFREIFLKRPDNILEFAADYFTDPRL.

In Homo sapiens (Human), this protein is RIIa domain-containing protein 1 (RIIAD1).